A 106-amino-acid chain; its full sequence is MIVTTTPNIEGKRIVRYCGVIAGEAILGANIFKDLSAGIRDIVGGRSGTYERELEKARAIALEELQQHAVALGANAVVGIDLDYETFGKANGMLMVSVSGTAVVVE.

It belongs to the UPF0145 family.

In Vibrio cholerae serotype O1 (strain ATCC 39315 / El Tor Inaba N16961), this protein is UPF0145 protein VC_A0951.